The chain runs to 423 residues: Glutamate-1-semialdehyde 2,1-aminomutase (423 aa).

Lysine 258 carries the N6-(pyridoxal phosphate)lysine modification.

The protein belongs to the class-III pyridoxal-phosphate-dependent aminotransferase family. HemL subfamily. Pyridoxal 5'-phosphate is required as a cofactor.

The protein resides in the cytoplasm. The enzyme catalyses (S)-4-amino-5-oxopentanoate = 5-aminolevulinate. It functions in the pathway porphyrin-containing compound metabolism; protoporphyrin-IX biosynthesis; 5-aminolevulinate from L-glutamyl-tRNA(Glu): step 2/2. The sequence is that of Glutamate-1-semialdehyde 2,1-aminomutase from Pyrobaculum arsenaticum (strain DSM 13514 / JCM 11321 / PZ6).